The chain runs to 210 residues: Large ribosomal subunit protein bL25 (210 aa).

The tract at residues 179–210 is disordered; that stretch reads LPPQQEEEIHSGEQQEPGQPEAEEGRETTPEG. A compositionally biased stretch (basic and acidic residues) spans 201-210; that stretch reads EEGRETTPEG.

This sequence belongs to the bacterial ribosomal protein bL25 family. CTC subfamily. Part of the 50S ribosomal subunit; part of the 5S rRNA/L5/L18/L25 subcomplex. Contacts the 5S rRNA. Binds to the 5S rRNA independently of L5 and L18.

This is one of the proteins that binds to the 5S RNA in the ribosome where it forms part of the central protuberance. This chain is Large ribosomal subunit protein bL25, found in Geobacillus thermodenitrificans (strain NG80-2).